Reading from the N-terminus, the 487-residue chain is Acetyl-coenzyme A carboxylase carboxyl transferase subunit beta, chloroplastic (487 aa).

Positions 180–201 are disordered; it reads SRNSSENEGSSKRTRTKGSDLT. The region spanning 218 to 487 is the CoA carboxyltransferase N-terminal domain; that stretch reads LWVQCENCYG…PLNQKSSKIK (270 aa). Zn(2+) is bound by residues cysteine 222, cysteine 225, cysteine 241, and cysteine 244. The C4-type zinc finger occupies 222–244; it reads CENCYGLNYKKFLKSKMNICEQC.

The protein belongs to the AccD/PCCB family. In terms of assembly, acetyl-CoA carboxylase is a heterohexamer composed of biotin carboxyl carrier protein, biotin carboxylase and 2 subunits each of ACCase subunit alpha and ACCase plastid-coded subunit beta (accD). Zn(2+) serves as cofactor.

It localises to the plastid. The protein resides in the chloroplast stroma. It carries out the reaction N(6)-carboxybiotinyl-L-lysyl-[protein] + acetyl-CoA = N(6)-biotinyl-L-lysyl-[protein] + malonyl-CoA. It participates in lipid metabolism; malonyl-CoA biosynthesis; malonyl-CoA from acetyl-CoA: step 1/1. Component of the acetyl coenzyme A carboxylase (ACC) complex. Biotin carboxylase (BC) catalyzes the carboxylation of biotin on its carrier protein (BCCP) and then the CO(2) group is transferred by the transcarboxylase to acetyl-CoA to form malonyl-CoA. The polypeptide is Acetyl-coenzyme A carboxylase carboxyl transferase subunit beta, chloroplastic (Atropa belladonna (Belladonna)).